Consider the following 347-residue polypeptide: UDP-3-O-acylglucosamine N-acyltransferase (347 aa).

The Proton acceptor role is filled by histidine 242.

It belongs to the transferase hexapeptide repeat family. LpxD subfamily. As to quaternary structure, homotrimer.

It catalyses the reaction a UDP-3-O-[(3R)-3-hydroxyacyl]-alpha-D-glucosamine + a (3R)-hydroxyacyl-[ACP] = a UDP-2-N,3-O-bis[(3R)-3-hydroxyacyl]-alpha-D-glucosamine + holo-[ACP] + H(+). It functions in the pathway bacterial outer membrane biogenesis; LPS lipid A biosynthesis. Catalyzes the N-acylation of UDP-3-O-acylglucosamine using 3-hydroxyacyl-ACP as the acyl donor. Is involved in the biosynthesis of lipid A, a phosphorylated glycolipid that anchors the lipopolysaccharide to the outer membrane of the cell. This Dechloromonas aromatica (strain RCB) protein is UDP-3-O-acylglucosamine N-acyltransferase.